Reading from the N-terminus, the 502-residue chain is Dynein regulatory complex subunit 2 (502 aa).

2 coiled-coil regions span residues 96-160 and 252-285; these read DSVI…RKAI and EKSS…HSRE.

The protein belongs to the DRC2 family. In terms of assembly, component of the nexin-dynein regulatory complex (N-DRC). Interacts with DRC1.

It is found in the cytoplasm. The protein localises to the cytoskeleton. Its subcellular location is the flagellum basal body. The protein resides in the cell projection. It localises to the cilium. It is found in the flagellum. The protein localises to the flagellum axoneme. Its function is as follows. Component of the nexin-dynein regulatory complex (N-DRC), a key regulator of ciliary/flagellar motility which maintains the alignment and integrity of the distal axoneme and regulates microtubule sliding in motile axonemes. Plays a critical role in the assembly of N-DRC and also stabilizes the assembly of multiple inner dynein arms and radial spokes. Coassembles with DRC1 to form a central scaffold needed for assembly of the N-DRC and its attachment to the outer doublet microtubules. In Rattus norvegicus (Rat), this protein is Dynein regulatory complex subunit 2 (Ccdc65).